Consider the following 360-residue polypeptide: Phospho-N-acetylmuramoyl-pentapeptide-transferase (360 aa).

Over 1–25 (MLVWLAEHLVKYYSGFNVFSYLTFR) the chain is Periplasmic. Residues 26 to 46 (AIVSLLTALFISLWMGPRMIA) traverse the membrane as a helical segment. Residues 47–71 (RLQKLSFGQVVRNDGPESHFSKRGT) lie on the Cytoplasmic side of the membrane. A helical membrane pass occupies residues 72-92 (PTMGGIMILTAIVISVLLWAY). Position 93 (P93) is a topological domain, periplasmic. The chain crosses the membrane as a helical span at residues 94-114 (SNPYVWCVLVVLIGYGIIGFV). Topologically, residues 115–131 (DDYRKVVRKDTKGLIAR) are cytoplasmic. A helical membrane pass occupies residues 132–152 (WKYFWMSVIALGVAFALYLVG). The Periplasmic segment spans residues 153-167 (KDTPVTQLVVPFFKD). Residues 168–188 (VMPQLGLFYILLSYFVIVGTG) form a helical membrane-spanning segment. At 189-198 (NAVNLTDGLD) the chain is on the cytoplasmic side. Residues 199–219 (GLAIMPTVFVAAGFALVAWAT) traverse the membrane as a helical segment. The Periplasmic portion of the chain corresponds to 220-235 (GNMNFANYLHIPYLRH). Residues 236 to 256 (AGELVIVCTAIVGAGLGFLWF) form a helical membrane-spanning segment. Over 257–262 (NTYPAQ) the chain is Cytoplasmic. Residues 263–283 (VFMGDVGSLALGGALGIIAVL) form a helical membrane-spanning segment. Topologically, residues 284–287 (LRQE) are periplasmic. Residues 288–308 (FLLVIMGGVFVVETLSVILQV) form a helical membrane-spanning segment. The Cytoplasmic segment spans residues 309–337 (GSFKLRGQRIFRMAPIHHHYELKGWPEPR). Residues 338 to 358 (VIVRFWIISLMLVLIGLATLK) form a helical membrane-spanning segment. Over 359–360 (VR) the chain is Periplasmic.

It belongs to the glycosyltransferase 4 family. MraY subfamily. Mg(2+) is required as a cofactor.

It is found in the cell inner membrane. It catalyses the reaction UDP-N-acetyl-alpha-D-muramoyl-L-alanyl-gamma-D-glutamyl-meso-2,6-diaminopimeloyl-D-alanyl-D-alanine + di-trans,octa-cis-undecaprenyl phosphate = di-trans,octa-cis-undecaprenyl diphospho-N-acetyl-alpha-D-muramoyl-L-alanyl-D-glutamyl-meso-2,6-diaminopimeloyl-D-alanyl-D-alanine + UMP. Its pathway is cell wall biogenesis; peptidoglycan biosynthesis. In terms of biological role, catalyzes the initial step of the lipid cycle reactions in the biosynthesis of the cell wall peptidoglycan: transfers peptidoglycan precursor phospho-MurNAc-pentapeptide from UDP-MurNAc-pentapeptide onto the lipid carrier undecaprenyl phosphate, yielding undecaprenyl-pyrophosphoryl-MurNAc-pentapeptide, known as lipid I. The sequence is that of Phospho-N-acetylmuramoyl-pentapeptide-transferase from Salmonella paratyphi C (strain RKS4594).